The chain runs to 197 residues: ATP-dependent Clp protease proteolytic subunit 2 (197 aa).

S96 serves as the catalytic Nucleophile. The active site involves H121.

Belongs to the peptidase S14 family. Fourteen ClpP subunits assemble into 2 heptameric rings which stack back to back to give a disk-like structure with a central cavity, resembling the structure of eukaryotic proteasomes.

Its subcellular location is the cytoplasm. The enzyme catalyses Hydrolysis of proteins to small peptides in the presence of ATP and magnesium. alpha-casein is the usual test substrate. In the absence of ATP, only oligopeptides shorter than five residues are hydrolyzed (such as succinyl-Leu-Tyr-|-NHMec, and Leu-Tyr-Leu-|-Tyr-Trp, in which cleavage of the -Tyr-|-Leu- and -Tyr-|-Trp bonds also occurs).. In terms of biological role, cleaves peptides in various proteins in a process that requires ATP hydrolysis. Has a chymotrypsin-like activity. Plays a major role in the degradation of misfolded proteins. The sequence is that of ATP-dependent Clp protease proteolytic subunit 2 from Parasynechococcus marenigrum (strain WH8102).